The chain runs to 839 residues: MRPRATTICSLFFLLRVLAEPAKNSDFYLPGDYLLGGLFTLHANMKGIVHLDYLQVPMCKEYETKVIGYNLMQAMRFAVEEINNDSSLLPDVLLGYEMVDVCYVSNNVQPVLYFLAQEDDLLPIQENYSNYVSRVVAVIGPDNSDAVMTVANFLSLFLLPQITYSAISDELRDKVRFPALLRTAPSADHHIEAMVQLMLHFRWNWIIVLVSGDTYGRDNGQLLGDRLARGDICIAFQETLPTVQPNQNMTSEERQRLVTIVDKLQQSTARVVVVFSPDLTLYNFFNEVLRQNFTGAVWIASESWAIDPVLHNLTELRHMGTFLGITIQSVPIPGFSEFRVRDPQAGPPPLSRTSQRSTCNQECDSCLNGTLSFNNVLRLSGERVVYSVYSAVYAVAHALHSLLGCDHGTCTKTEVYPWQLLKEIWKVNFTLLDHQISFDPQGDMALHLEIVQWQWDLSQNPFQSVASYYPLQRQLKTIQDISWHTINNTIPVSMCSKRCQSGQKKKPVGIHICCFECIDCLPGTFLNQTEDEYECQACPSNEWSHQSEASCFKRRLAFLEWHEAPTIVVALLAALGFLSTLAILVIFWRHFQTPMVRSAGGPMCFLMLTLLLVAYMVVPVYVGPPKVSTCFCRQALFPLCFTICISCIAVRSFQIVCVFKMASRFPRAYSYWVRYQGPYVSMAFITVLKMVTVVIGMLATGLNPTTRIDPDDPKIMIVSCNPNYRNSLFFNTGLDLLLSVVGFSFAYMGKELPTNYNEAKFITLSMTFYFTSSVSLCTFMSAYNGVLVTIMDLLVTVLNLLAISLGYFGPKCYMILFYPERNTPAYFNSMIQGYTMRRD.

The signal sequence occupies residues M1–A19. Over E20 to T566 the chain is Extracellular. N84, N127, N248, N292, N312, N368, N428, N487, and N527 each carry an N-linked (GlcNAc...) asparagine glycan. A helical membrane pass occupies residues I567–F587. Residues W588 to P602 lie on the Cytoplasmic side of the membrane. The chain crosses the membrane as a helical span at residues M603–G623. At P624–A635 the chain is on the extracellular side. Residues L636–V656 traverse the membrane as a helical segment. The Cytoplasmic portion of the chain corresponds to C657 to S681. Residues M682–L702 form a helical membrane-spanning segment. The Extracellular segment spans residues N703 to S727. A helical transmembrane segment spans residues L728–M748. Residues G749–K760 are Cytoplasmic-facing. Residues F761–S781 form a helical membrane-spanning segment. The Extracellular portion of the chain corresponds to A782–N784. The chain crosses the membrane as a helical span at residues G785–L805. The Cytoplasmic segment spans residues G806 to D839.

The protein belongs to the G-protein coupled receptor 3 family. TAS1R subfamily. As to quaternary structure, forms heterodimers with TAS1R3.

The protein localises to the cell membrane. Functionally, putative taste receptor. TAS1R2/TAS1R3 recognizes diverse natural and synthetic sweeteners. In Papio hamadryas (Hamadryas baboon), this protein is Taste receptor type 1 member 2 (TAS1R2).